The chain runs to 179 residues: Replication restart protein DnaT (179 aa).

The tract at residues 156-179 (GGLPKRDVNTVSEPDSQIPPGFRG) is disordered.

This sequence belongs to the DnaT family. As to quaternary structure, homooligomerizes. Interacts with PriB. Component of the replication restart primosome. Primosome assembly occurs via a 'hand-off' mechanism. PriA binds to replication forks, subsequently PriB then DnaT bind; DnaT then displaces ssDNA to generate the helicase loading substrate.

In terms of biological role, involved in the restart of stalled replication forks, which reloads the replicative helicase on sites other than the origin of replication. Can function in multiple replication restart pathways. Displaces ssDNA from a PriB-ssDNA complex. Probably forms a spiral filament on ssDNA. The polypeptide is Replication restart protein DnaT (Escherichia coli O81 (strain ED1a)).